The following is a 434-amino-acid chain: 3-phosphoshikimate 1-carboxyvinyltransferase (434 aa).

3-phosphoshikimate contacts are provided by lysine 22, serine 23, and arginine 27. Lysine 22 provides a ligand contact to phosphoenolpyruvate. Phosphoenolpyruvate is bound by residues glycine 93 and arginine 121. Serine 168, serine 169, glutamine 170, serine 199, aspartate 320, and lysine 347 together coordinate 3-phosphoshikimate. A phosphoenolpyruvate-binding site is contributed by glutamine 170. Residue aspartate 320 is the Proton acceptor of the active site. Phosphoenolpyruvate-binding residues include arginine 351, arginine 395, and lysine 420.

This sequence belongs to the EPSP synthase family. In terms of assembly, monomer.

The protein resides in the cytoplasm. The catalysed reaction is 3-phosphoshikimate + phosphoenolpyruvate = 5-O-(1-carboxyvinyl)-3-phosphoshikimate + phosphate. It functions in the pathway metabolic intermediate biosynthesis; chorismate biosynthesis; chorismate from D-erythrose 4-phosphate and phosphoenolpyruvate: step 6/7. Catalyzes the transfer of the enolpyruvyl moiety of phosphoenolpyruvate (PEP) to the 5-hydroxyl of shikimate-3-phosphate (S3P) to produce enolpyruvyl shikimate-3-phosphate and inorganic phosphate. The protein is 3-phosphoshikimate 1-carboxyvinyltransferase of Cupriavidus taiwanensis (strain DSM 17343 / BCRC 17206 / CCUG 44338 / CIP 107171 / LMG 19424 / R1) (Ralstonia taiwanensis (strain LMG 19424)).